Reading from the N-terminus, the 750-residue chain is Catalase-peroxidase 1 (750 aa).

The segment at residues 90-238 (WHSAGTYRVM…VSAAHMGLIY (149 aa)) is a cross-link (tryptophyl-tyrosyl-methioninium (Trp-Tyr) (with M-264)). The Proton acceptor role is filled by His91. Residues 199–218 (NEGHKESGVIDGSESKKGHK) are disordered. A compositionally biased stretch (basic and acidic residues) spans 200 to 218 (EGHKESGVIDGSESKKGHK). Positions 238–264 (YVNPEGPDGIPDPVAAARDIRTTFSRM) form a cross-link, tryptophyl-tyrosyl-methioninium (Tyr-Met) (with W-90). His279 lines the heme b pocket.

Belongs to the peroxidase family. Peroxidase/catalase subfamily. In terms of assembly, homodimer or homotetramer. Predominantly homodimeric. Requires heme b as cofactor. In terms of processing, formation of the three residue Trp-Tyr-Met cross-link is important for the catalase, but not the peroxidase activity of the enzyme.

Its subcellular location is the cytoplasm. It carries out the reaction H2O2 + AH2 = A + 2 H2O. It catalyses the reaction 2 H2O2 = O2 + 2 H2O. Bifunctional enzyme with both catalase and broad-spectrum peroxidase activity. In Pyricularia oryzae (strain 70-15 / ATCC MYA-4617 / FGSC 8958) (Rice blast fungus), this protein is Catalase-peroxidase 1.